The primary structure comprises 290 residues: Enoyl-CoA hydratase, mitochondrial (290 aa).

Residues 1-29 constitute a mitochondrion transit peptide; that stretch reads MAALRALLPRACNSLLSPVRCPEFRRFAS. 98–101 contributes to the substrate binding site; it reads ADIK. An N6-acetyllysine; alternate mark is found at lysine 101 and lysine 115. N6-succinyllysine; alternate occurs at positions 101 and 115. Glycine 141 serves as a coordination point for substrate. N6-succinyllysine is present on lysine 204. Position 211 is an N6-acetyllysine (lysine 211).

Belongs to the enoyl-CoA hydratase/isomerase family. As to quaternary structure, homohexamer; dimer of trimers. In terms of tissue distribution, detected in liver (at protein level).

The protein resides in the mitochondrion matrix. It catalyses the reaction a (3S)-3-hydroxyacyl-CoA = a (2E)-enoyl-CoA + H2O. The enzyme catalyses a (3E)-enoyl-CoA = a 4-saturated (2E)-enoyl-CoA. The catalysed reaction is (3E)-hexenoyl-CoA = (2E)-hexenoyl-CoA. It carries out the reaction (3S)-3-hydroxybutanoyl-CoA = (2E)-butenoyl-CoA + H2O. It catalyses the reaction 3-hydroxyisovaleryl-CoA = 3-methylbut-2-enoyl-CoA + H2O. The enzyme catalyses 3-hydroxypropanoyl-CoA = acryloyl-CoA + H2O. The catalysed reaction is 3-hydroxybutanoyl-CoA = (2E)-butenoyl-CoA + H2O. It carries out the reaction 2-methylpropenoyl-CoA + H2O = (S)-3-hydroxyisobutanoyl-CoA. It catalyses the reaction (3S)-hydroxyhexanoyl-CoA = (2E)-hexenoyl-CoA + H2O. The enzyme catalyses (3S)-hydroxydecanoyl-CoA = (2E)-decenoyl-CoA + H2O. The protein operates within lipid metabolism; fatty acid beta-oxidation. Its function is as follows. Converts unsaturated trans-2-enoyl-CoA species ((2E)-enoyl-CoA) to the corresponding 3(S)-3-hydroxyacyl-CoA species through addition of a water molecule to the double bond. Catalyzes the hydration of medium- and short-chained fatty enoyl-CoA thioesters from 4 carbons long (C4) up to C16. Has high substrate specificity for crotonyl-CoA ((2E)-butenoyl-CoA) and moderate specificity for acryloyl-CoA, 3-methylcrotonyl-CoA (3-methyl-(2E)-butenoyl-CoA) and methacrylyl-CoA ((2E)-2-methylpropenoyl-CoA). Can bind tiglyl-CoA (2-methylcrotonoyl-CoA), but hydrates only a small amount of this substrate. Plays a key role in the beta-oxidation spiral of short- and medium-chain fatty acid oxidation. At a lower rate than the hydratase reaction, catalyzes the isomerase reaction of trans-3-enoyl-CoA species (such as (3E)-hexenoyl-CoA) to trans-2-enoyl-CoA species (such as (2E)-hexenoyl-CoA), which are subsequently hydrated to 3(S)-3-hydroxyacyl-CoA species (such as (3S)-hydroxyhexanoyl-CoA). This chain is Enoyl-CoA hydratase, mitochondrial, found in Rattus norvegicus (Rat).